The chain runs to 309 residues: Glutaminase (309 aa).

Substrate is bound by residues Ser-65, Asn-117, Glu-162, Asn-169, Tyr-193, Tyr-245, and Val-263.

It belongs to the glutaminase family. Homotetramer.

The catalysed reaction is L-glutamine + H2O = L-glutamate + NH4(+). The chain is Glutaminase from Shouchella clausii (strain KSM-K16) (Alkalihalobacillus clausii).